Reading from the N-terminus, the 659-residue chain is Threonine--tRNA ligase (659 aa).

A TGS domain is found at Met-1 to Thr-60. Catalytic regions lie at residues Thr-234–Ala-548 and Asp-252–Pro-552. Cys-349, His-400, and His-529 together coordinate Zn(2+).

The protein belongs to the class-II aminoacyl-tRNA synthetase family. As to quaternary structure, homodimer. Requires Zn(2+) as cofactor.

It is found in the cytoplasm. The catalysed reaction is tRNA(Thr) + L-threonine + ATP = L-threonyl-tRNA(Thr) + AMP + diphosphate + H(+). Catalyzes the attachment of threonine to tRNA(Thr) in a two-step reaction: L-threonine is first activated by ATP to form Thr-AMP and then transferred to the acceptor end of tRNA(Thr). Also edits incorrectly charged L-seryl-tRNA(Thr). In Thermus thermophilus (strain ATCC 27634 / DSM 579 / HB8), this protein is Threonine--tRNA ligase.